Consider the following 118-residue polypeptide: UPF0102 protein Nwi_0116 (118 aa).

It belongs to the UPF0102 family.

This Nitrobacter winogradskyi (strain ATCC 25391 / DSM 10237 / CIP 104748 / NCIMB 11846 / Nb-255) protein is UPF0102 protein Nwi_0116.